Consider the following 319-residue polypeptide: Probable metallo-hydrolase YqjP (319 aa).

Positions 67, 69, 71, 72, 165, 184, and 231 each coordinate Zn(2+).

It belongs to the metallo-beta-lactamase superfamily. It depends on Zn(2+) as a cofactor.

This is Probable metallo-hydrolase YqjP (yqjP) from Bacillus subtilis (strain 168).